The following is a 156-amino-acid chain: Small ribosomal subunit protein uS7 (156 aa).

Belongs to the universal ribosomal protein uS7 family. As to quaternary structure, part of the 30S ribosomal subunit. Contacts proteins S9 and S11.

Its function is as follows. One of the primary rRNA binding proteins, it binds directly to 16S rRNA where it nucleates assembly of the head domain of the 30S subunit. Is located at the subunit interface close to the decoding center, probably blocks exit of the E-site tRNA. The protein is Small ribosomal subunit protein uS7 of Baumannia cicadellinicola subsp. Homalodisca coagulata.